The following is a 520-amino-acid chain: Putative lipase ATG15 (520 aa).

Topologically, residues 1 to 14 (MLHKSPSRKRFASP) are cytoplasmic. The helical; Signal-anchor for type II membrane protein transmembrane segment at 15-35 (LHLGCILTLTVLCLIAYYFAL) threads the bilayer. Residues 36-520 (PDYLSVGKSS…WLGFCTKYEL (485 aa)) lie on the Lumenal side of the membrane. Asparagine 173, asparagine 202, and asparagine 208 each carry an N-linked (GlcNAc...) asparagine glycan. Residue serine 332 is the Charge relay system of the active site.

This sequence belongs to the AB hydrolase superfamily. Lipase family. As to quaternary structure, binds to both phosphatidylinositol (PI) and phosphatidylinositol 3,5-bisphosphate (PIP2).

Its subcellular location is the endosome. The protein localises to the multivesicular body membrane. The protein resides in the prevacuolar compartment membrane. The enzyme catalyses a triacylglycerol + H2O = a diacylglycerol + a fatty acid + H(+). Functionally, lipase which is essential for lysis of subvacuolar cytoplasm to vacuole targeted bodies and intravacuolar autophagic bodies. Involved in the lysis of intravacuolar multivesicular body (MVB) vesicles. The intravacuolar membrane disintegration by ATG15 is critical to life span extension. This Saccharomyces cerevisiae (strain YJM789) (Baker's yeast) protein is Putative lipase ATG15 (ATG15).